A 667-amino-acid chain; its full sequence is Interleukin-17 receptor E (667 aa).

Positions 1-23 (MGSSRLAALLLPLLLIVIDLSDS) are cleaved as a signal peptide. Residues 24–454 (AGIGFRHLPH…LLCPDVSYRH (431 aa)) are Extracellular-facing. Residues 126–174 (LPRRHLSEKSHHISIPSPDISHKGLRSKRTQPSDPETWESLPRLDSQRH) are disordered. N-linked (GlcNAc...) asparagine glycans are attached at residues N318, N347, and N364. Residues 455–475 (LGLLILALLALLTLLGVVLAL) form a helical membrane-spanning segment. Residues 476-667 (TCRRPQSGPG…REAARLADLG (192 aa)) are Cytoplasmic-facing. Residues 487–624 (ARPVLLLHAA…LLRDLPRLLR (138 aa)) enclose the SEFIR domain.

Forms heterodimers with IL17RA; the heterodimer binds IL17C. In terms of tissue distribution, predominantly expressed in mucosal tissues with high levels in keratinocytes and colon epithelial cells. Very low expression in dermal fibroblasts. Expressed in various tumor cell lines.

It is found in the cell membrane. The protein resides in the cytoplasm. The protein localises to the secreted. Its function is as follows. Specific functional receptor for IL17C. May be signaling through the NF-kappa-B and MAPK pathways. May require TRAF3IP2 /ACT1 for signaling. May be a crucial regulator in innate immunity to bacterial pathogens. Isoform 2 and isoform 4 may be either cytoplasmic inactive or dominant active forms. Isoform 3 and isoform 5 may act as soluble decoy receptors. In Homo sapiens (Human), this protein is Interleukin-17 receptor E (IL17RE).